The following is a 156-amino-acid chain: tRNA (cytidine(34)-2'-O)-methyltransferase (156 aa).

G102, L124, and S132 together coordinate S-adenosyl-L-methionine.

Belongs to the class IV-like SAM-binding methyltransferase superfamily. RNA methyltransferase TrmH family. TrmL subfamily. Homodimer.

The protein localises to the cytoplasm. The enzyme catalyses cytidine(34) in tRNA + S-adenosyl-L-methionine = 2'-O-methylcytidine(34) in tRNA + S-adenosyl-L-homocysteine + H(+). It carries out the reaction 5-carboxymethylaminomethyluridine(34) in tRNA(Leu) + S-adenosyl-L-methionine = 5-carboxymethylaminomethyl-2'-O-methyluridine(34) in tRNA(Leu) + S-adenosyl-L-homocysteine + H(+). In terms of biological role, methylates the ribose at the nucleotide 34 wobble position in the two leucyl isoacceptors tRNA(Leu)(CmAA) and tRNA(Leu)(cmnm5UmAA). Catalyzes the methyl transfer from S-adenosyl-L-methionine to the 2'-OH of the wobble nucleotide. In Burkholderia ambifaria (strain ATCC BAA-244 / DSM 16087 / CCUG 44356 / LMG 19182 / AMMD) (Burkholderia cepacia (strain AMMD)), this protein is tRNA (cytidine(34)-2'-O)-methyltransferase.